A 1169-amino-acid polypeptide reads, in one-letter code: LGFDPPHQSDTRTIYIANRFPQNGLYTPQKFIDNRIISSKYTVWNFVPKNLFEQFRRVANFYFLIIFLVQLMIDTPTSPITSGLPLFFVITVTAIKQGYEDWLRHNSDNEVNGAPVYVVRSGGLVKTRSKNIRVGDIVRIAKDEIFPADLVLLSSDRLDGSCHVTTASLDGETNLKTHVAVPETAVLQTVANLDTLVAVIECQQPEADLYRFMGRMIITQQMEEIVRPLGPESLLLRGARLKNTKEIFGVAVYTGMETKMALNYKSKSQKRSAVEKSMNTFLIIYLIILISEAIISTILKYTWQAEEKWDEPWYNQKTEHQRNSSKILRFISDFLAFLVLYNFIIPISLYVTVEMQKFLGSFFIGWDLDLYHEESDQKAQVNTSDLNEELGQVEYVFTDKTGTLTENEMQFRECSIHGMKYQEINGRLVPEGPTPDSSEGNLSYLSSLSHVNSLSHLTSSSSFRTSPENDTELIKEHDLFFKAVSLCHTVQISSVQTDGIGDGPWQSSLAPSQLEYYASSPDEKALVEAAARIGIVFVGNTEETMEVKILGKLERYKLLHVLEFDSDRRRMSVIVQAPSGERFLFAKGAESSILPKCIGGEIEKTRIHVDEFALKGLRTLCVAYRQFTSKEYEVIDRRLFEARTALQQREEKLADVFHYIEKDLILLGATAVEDRLQDKVRETIEALRMAGIKVWVLTGDKHETAVSVSLSCGHFHRTMNILELTNQKSDSECAEQLRQLARRITEDHVIQHGLVVDGTSLSLALREHEKLFMEVCRNCSAVLCCRMAPLQKAKVIRLIKISPEKPITIGCWDGANDVSMIQEAHVGIGIMGKERRQAARNSDYAIARFKFLSKLLFVHGHFYYIRIATLVQYFFYKNVCFITPQFLYQFYCLFSQQTLYDSVYLTLYNICFTSLPILIYSLLEQHIDPHILQNKPTLYRDISKNRLLSIKTFLYWTILGFSRSFIFLFGSYFLIGKDASLLGNGQMFGNWTFGTLVFTVMVITVTVKMALETHFWTWINHLVTWGSIIFYFVFSLFYGGILWPFLGSQNMYFVFIQLVSSGSAWFAIILMVVTCLFLDVMKKVFDRQLHPTSTEKAQLTETNSSIKCVDSLCCFPEGETTCTSVRRMLERVIGRCSPTHISRSWSASDPFYTNDRSILTLSTMDSSTC.

At L1–V47 the chain is on the cytoplasmic side. A helical transmembrane segment spans residues P48–V69. Residues Q70–D74 lie on the Extracellular side of the membrane. A helical transmembrane segment spans residues T75–K96. The Cytoplasmic portion of the chain corresponds to Q97–F281. A helical membrane pass occupies residues L282–W303. Residues Q304–D333 lie on the Extracellular side of the membrane. A helical membrane pass occupies residues F334 to V351. At T352–A868 the chain is on the cytoplasmic side. The 4-aspartylphosphate intermediate role is filled by D399. Residues D399, K400, T401, E523, F564, K587, R618, T698, G699, D700, R786, and K792 each contribute to the ATP site. D399 contributes to the Mg(2+) binding site. T401 serves as a coordination point for Mg(2+). The required for binding to the RING-finger of HLTF stretch occupies residues K794–S802. D813 is a binding site for Mg(2+). Residues N816 and D817 each contribute to the ATP site. D817 is a binding site for Mg(2+). A helical membrane pass occupies residues T869–F890. Over Y891 to S902 the chain is Extracellular. A helical membrane pass occupies residues V903–L922. Residues L923–T952 are Cytoplasmic-facing. A helical transmembrane segment spans residues F953 to L974. Topologically, residues I975–G989 are extracellular. The helical transmembrane segment at N990 to E1012 threads the bilayer. Topologically, residues T1013–T1017 are cytoplasmic. The helical transmembrane segment at W1018–G1039 threads the bilayer. At G1040–Q1057 the chain is on the extracellular side. Residues L1058 to K1082 traverse the membrane as a helical segment. Over K1083 to C1169 the chain is Cytoplasmic. S1146 carries the post-translational modification Phosphoserine.

The protein belongs to the cation transport ATPase (P-type) (TC 3.A.3) family. Type IV subfamily. Component of a P4-ATPase flippase complex which consists of a catalytic alpha subunit ATP11B and an accessory beta subunit TMEM30A. In terms of assembly, interacts with HLTF (via the RING-finger). Mg(2+) is required as a cofactor. Ubiquitously expressed.

It localises to the recycling endosome membrane. Its subcellular location is the early endosome. The protein resides in the endoplasmic reticulum. It is found in the golgi apparatus. The protein localises to the trans-Golgi network. It localises to the nucleus inner membrane. The enzyme catalyses ATP + H2O + phospholipidSide 1 = ADP + phosphate + phospholipidSide 2.. It catalyses the reaction a 1,2-diacyl-sn-glycero-3-phospho-L-serine(out) + ATP + H2O = a 1,2-diacyl-sn-glycero-3-phospho-L-serine(in) + ADP + phosphate + H(+). It carries out the reaction a 1,2-diacyl-sn-glycero-3-phosphoethanolamine(out) + ATP + H2O = a 1,2-diacyl-sn-glycero-3-phosphoethanolamine(in) + ADP + phosphate + H(+). Its function is as follows. Catalytic component of a P4-ATPase flippase complex which catalyzes the hydrolysis of ATP coupled to the transport of aminophospholipids, phosphatidylserines (PS) and phosphatidylethanolamines (PE), from the outer to the inner leaflet of intracellular membranes. May contribute to the maintenance of membrane lipid asymmetry in endosome compartment. Appears to play a role in the subnuclear trafficking of transcription factors with RING motifs. In Oryctolagus cuniculus (Rabbit), this protein is Phospholipid-transporting ATPase IF (ATP11B).